Here is a 309-residue protein sequence, read N- to C-terminus: Ketosamine-3-kinase (309 aa).

Position 20 is a phosphoserine (serine 20). 89 to 91 provides a ligand contact to ATP; that stretch reads EHL. Aspartate 217 functions as the Proton acceptor in the catalytic mechanism.

It belongs to the fructosamine kinase family.

The enzyme catalyses N(6)-D-ribulosyl-L-lysyl-[protein] + ATP = N(6)-(3-O-phospho-D-ribulosyl)-L-lysyl-[protein] + ADP + H(+). It carries out the reaction N(6)-(D-psicosyl)-L-lysyl-[protein] + ATP = N(6)-(3-O-phospho-D-psicosyl)-L-lysyl-[protein] + ADP + H(+). Its function is as follows. Ketosamine-3-kinase involved in protein deglycation by mediating phosphorylation of ribuloselysine and psicoselysine on glycated proteins, to generate ribuloselysine-3 phosphate and psicoselysine-3 phosphate, respectively. Ribuloselysine-3 phosphate and psicoselysine-3 phosphate adducts are unstable and decompose under physiological conditions. Not able to phosphorylate fructoselysine. In Mus musculus (Mouse), this protein is Ketosamine-3-kinase.